A 333-amino-acid chain; its full sequence is MPSMPEEPILTPTPDRFCMFPIQYPQIWEMYKKAEASFWTAEEVDLSQDNRDWENSLTNDERHFIKHVLAFFAASDGIVLENLSTRFMSDVQISEARAFYGFQIAIENIHSEMYSLLLDTYIKDNKERDHLFRAIETIPCVTKKAEWAMKWINGSQSFAERIVAFACVEGIFFSGSFCSIFWLKKRGLMPGLTFSNELISRDEGLHCDFACLIYSLLRTKLDEDRLKAIVCDAVEIEREFVCDALPCALVGMNRELMSQYIEFVADRLLAALGCAKVYGVSNPFDWMELISLQGKTNFFEKRVGEYQKASIMSSVHGNAAFNDDHVFKLDEDF.

Fe cation is bound by residues Asp-76, Glu-107, and His-110. The active site involves Tyr-114. Fe cation contacts are provided by Glu-169, Glu-203, and His-206.

It belongs to the ribonucleoside diphosphate reductase small chain family. Heterodimer of a large and a small chain. Fe cation serves as cofactor. In terms of tissue distribution, expressed in roots, rosette leaves, stems and flowers.

It is found in the cytoplasm. The catalysed reaction is a 2'-deoxyribonucleoside 5'-diphosphate + [thioredoxin]-disulfide + H2O = a ribonucleoside 5'-diphosphate + [thioredoxin]-dithiol. Its function is as follows. Provides the precursors necessary for DNA synthesis. Catalyzes the biosynthesis of deoxyribonucleotides from the corresponding ribonucleotides. The polypeptide is Ribonucleoside-diphosphate reductase small chain B (RNR2B) (Arabidopsis thaliana (Mouse-ear cress)).